A 468-amino-acid chain; its full sequence is Monogalactosyldiacylglycerol synthase 2, chloroplastic (468 aa).

UDP is bound by residues H82, R251, 361–365, and E383; that span reads GTIAE.

It belongs to the glycosyltransferase 28 family. Expressed mainly in floral buds. Detected in roots, leaves, stems, siliques and pollen tubes.

It is found in the plastid. The protein localises to the chloroplast outer membrane. The catalysed reaction is a 1,2-diacyl-sn-glycerol + UDP-alpha-D-galactose = a 1,2-diacyl-3-O-(beta-D-galactosyl)-sn-glycerol + UDP + H(+). It catalyses the reaction 1,2-di-(9Z,12Z-octadecadienoyl)-sn-glycerol + UDP-alpha-D-galactose = 1,2-di-(9Z,12Z-octadecadienoyl)-3-beta-D-galactosyl-sn-glycerol + UDP + H(+). It carries out the reaction 1-(9Z-octadecenoyl)-2-hexadecanoyl-sn-glycerol + UDP-alpha-D-galactose = 1-(9Z-octadecenoyl)-2-hexadecanoyl-3-beta-D-galactosyl-sn-glycerol + UDP + H(+). The enzyme catalyses 1,2-di-(9Z-octadecenoyl)-sn-glycerol + UDP-alpha-D-galactose = 1,2-di-(9Z-octadecenoyl)-3-beta-D-galactosyl-sn-glycerol + UDP + H(+). With respect to regulation, inhibited by galvestine-1. Its function is as follows. Involved in the synthesis of monogalactosyldiacylglycerol, the major structural component of photosynthetic membranes and in the chloroplast envelope biogenesis. Can use both prokaryotic (18:1/16:0) or eukaryotic (18:2/18:2) 1,2-diacylglycerol species, but operates with some preference for the eukaryotic one. Plays a minor role in galactolipid synthesis in chloroplasts. Is required for membrane lipid remodeling in phosphate-starved roots. Acts as the minor factor involved in digalactosyldiacylglycerol (DGDG) biosynthesis in phosphate-starved roots. Does not seem to be required for plant growth under nutrient-sufficient conditions. Required for membrane lipid remodeling in plants grown in acidic conditions. This Arabidopsis thaliana (Mouse-ear cress) protein is Monogalactosyldiacylglycerol synthase 2, chloroplastic.